A 152-amino-acid chain; its full sequence is Protein-export protein SecB (152 aa).

The protein belongs to the SecB family. As to quaternary structure, homotetramer, a dimer of dimers. One homotetramer interacts with 1 SecA dimer.

The protein resides in the cytoplasm. Functionally, one of the proteins required for the normal export of preproteins out of the cell cytoplasm. It is a molecular chaperone that binds to a subset of precursor proteins, maintaining them in a translocation-competent state. It also specifically binds to its receptor SecA. In Rickettsia peacockii (strain Rustic), this protein is Protein-export protein SecB.